A 68-amino-acid polypeptide reads, in one-letter code: MIFPIRCFSCGAVISEVYEEYRTRLKNGENPEEILNDLEVKKYCCRRMFASHRLDNDRELFDDIVEYK.

The Zn(2+) site is built by Cys-7, Cys-10, Cys-44, and Cys-45.

The protein belongs to the archaeal Rpo10/eukaryotic RPB10 RNA polymerase subunit family. In terms of assembly, part of the RNA polymerase complex. Zn(2+) is required as a cofactor.

Its subcellular location is the cytoplasm. The enzyme catalyses RNA(n) + a ribonucleoside 5'-triphosphate = RNA(n+1) + diphosphate. Functionally, DNA-dependent RNA polymerase (RNAP) catalyzes the transcription of DNA into RNA using the four ribonucleoside triphosphates as substrates. The sequence is that of DNA-directed RNA polymerase subunit Rpo10 from Methanococcus maripaludis (strain C5 / ATCC BAA-1333).